We begin with the raw amino-acid sequence, 133 residues long: Protein PROTON GRADIENT REGULATION 5, chloroplastic (133 aa).

A chloroplast-targeting transit peptide spans 1–60 (MAAASISAIGCNQTLIGTSFYGGWGSSISGEDYQTMLSKTVAPPQQARVSRKAIRAVPMM).

This sequence belongs to the PGR5 family. In terms of assembly, interacts with PGRL1A and PGRL1B. Post-translationally, disulfide bonds; Cys-11 and Cys-105 are probably involved in the formation of disulfide bridges with 'Cys-300' and 'Cys-303' of PGRL1A. 'Cys-272' and 'Cys-275' of PGRL1A may also be used to form the disulfide bridges, but in this case the cyclic electron flow is lost.

The protein localises to the plastid. Its subcellular location is the chloroplast thylakoid membrane. Functionally, critical for growth under fluctuating-light conditions. Involved in the regulation of the cyclic electron flow (CEF) around Photosystem I. Essential for the reduction of PGRL1A by ferredoxin and for photoprotection. Contributes to maximize photosynthesis efficiency after a long dark adaptation via the regulation of non-photochemical quenching (NPQ); acts independently from DLDG1. Promotes the induction of steady-state proton motive force (pmf) and energy-dependent quenching (qE). The protein is Protein PROTON GRADIENT REGULATION 5, chloroplastic of Arabidopsis thaliana (Mouse-ear cress).